The chain runs to 85 residues: uncharacterized protein (85 aa).

This is an uncharacterized protein from Acidianus filamentous virus 2 (isolate Italy/Pozzuoli) (AFV-2).